A 293-amino-acid polypeptide reads, in one-letter code: MRNSFKIMTALALGLFAMQANAKFKVVTTFTVIQDIAQNVAGNAATVESITKPGAEIHEYEPTPKDIVKAQSADLILWNGLNLERWFERFFQNVKDKPAVVVTEGIQPLSIYEGPYKDAPNPHAWMSPSNALIYIENIKNALVKYDPQNAAVYEKNAADYAQKIKQLDEPLRAKLAQIPEAQRWLVTSEGAFSYLAKDYNLKEGYLWPINAEQQGTPQQVRKVIDLVRKNNIPVVFSESTISAKPAQQVAKESGAKYGGVLYVDSLSAKNGPVPTYIDLLNVTVSTIVKGFGK.

Positions 1–22 (MRNSFKIMTALALGLFAMQANA) are cleaved as a signal peptide. Residues 23–48 (KFKVVTTFTVIQDIAQNVAGNAATVE) form an interaction with host components region. 4 residues coordinate a divalent metal cation: His-58, His-123, Glu-189, and Asp-264.

Belongs to the bacterial solute-binding protein 9 family. As to quaternary structure, interacts with host laminin and vitronectin. Can interact with both immobilized and soluble vitronectin.

It localises to the cell outer membrane. The protein localises to the cell surface. Its subcellular location is the periplasm. Functionally, part of an ATP-binding cassette (ABC) transport system involved in metal import. Binds a metal with high affinity and specificity and delivers it to the membrane permease for translocation into the cytoplasm. Acts as an adhesin that promotes binding of H.influenzae to host laminin and vitronectin. In addition, interaction with serum vitronectin plays an important role in bacterial serum resistance. The protein is Putative metal ABC transporter substrate-binding protein Hpf (hpf) of Haemophilus influenzae (strain NTHi 3655).